Reading from the N-terminus, the 234-residue chain is Sugar fermentation stimulation protein homolog (234 aa).

Belongs to the SfsA family.

This is Sugar fermentation stimulation protein homolog from Shewanella baltica (strain OS195).